Consider the following 402-residue polypeptide: MKAAYLDCFSGISGDMLLGALVDAGLDFNLLQRDLAGLDLDEYELYEQKVLKQGIRGTQIHVHALEGHVHRHLSDIQAIIGRSALPPQVKEKSLEIFTRLGKAEAKIHGTDIEQIHFHEVGAVDAIVDIVGAVIGFWRLGIEKVFASPIHVGKGFVKAAHGLLPVPAPATLELLTGVPIYAQDVEGELATPTGAAIVTAYCREFGPFPKIRVERVGYGAGVKDLTIPNLLRLTVGELADEDKGQEGIREGEALTLEVNIDDMNPECYDYLFEKLFQAGAMDVYIQTIQMKKNRPAVLLTVQTPYHKLEEMRKILFQETTTIGLRVYPIKKYMLPYELFTVETNYGSAKVKVAFMEGRACTVSPEYEDCRRLARLTGEPLKQIYEEIKEKAKILLYSTKYPID.

Belongs to the LarC family.

The enzyme catalyses Ni(II)-pyridinium-3,5-bisthiocarboxylate mononucleotide = pyridinium-3,5-bisthiocarboxylate mononucleotide + Ni(2+). Involved in the biosynthesis of a nickel-pincer cofactor ((SCS)Ni(II) pincer complex). Binds Ni(2+), and functions in nickel delivery to pyridinium-3,5-bisthiocarboxylic acid mononucleotide (P2TMN), to form the mature cofactor. Is thus probably required for the activation of nickel-pincer cofactor-dependent enzymes. The sequence is that of Pyridinium-3,5-bisthiocarboxylic acid mononucleotide nickel insertion protein from Desulfitobacterium hafniense (strain DSM 10664 / DCB-2).